The sequence spans 92 residues: Defensin Lucifensin (92 aa).

A signal peptide spans M1–A23. Positions L24–R52 are excised as a propeptide. Intrachain disulfides connect C55–C82, C68–C88, and C72–C90.

This sequence belongs to the invertebrate defensin family. Type 1 subfamily. In terms of processing, the disulfide bonds are essential for antimicrobial activity. As to expression, larval fat body, hemolymph and salivary glands (at protein level). Expressed in the salivary glands of all larval stages.

The protein localises to the secreted. Its subcellular location is the host cell membrane. In terms of biological role, shows strong antibacterial activity against numerous Gram-positive bacteria. It selectively inhibits peptidoglycan biosynthesis through complex formation with the cell wall precursor lipid II (1:1 molar ratio) thus inhibiting cell wall synthesis. Shows antibacterial activity against the Gram-positive bacteria M.luteus, E.fecalis (MIC=32 mg/L), S.aureus (MIC=16 mg/L), S.carnosus (MIC=2 mg/L), S.pneumoniae (MIC=2 mg/L) and S.pyogenes (MIC=2 mg/L) and against a number of methicillin-resistant S.aureus and glycopeptide-intermediate S.aureus isolates. Does not show antibacterial activity against Gram-negative bacteria or antifungal activity against C.utilis. Shows slight antifungal activity against C.albicans. The chain is Defensin Lucifensin from Lucilia sericata (Green bottle fly).